Here is a 331-residue protein sequence, read N- to C-terminus: XylDLEGF operon transcriptional activator 1 (331 aa).

The region spanning 214 to 315 is the HTH araC/xylS-type domain; the sequence is ERVVQFIEEN…GELPSDTLRR (102 aa). DNA-binding regions (H-T-H motif) lie at residues 231–252 and 282–305; these read ERLA…EKHA and VTEM…RSTF.

It is found in the cytoplasm. Functionally, regulatory protein of the TOL plasmid xyl operons. XylS activates the xylXYZLTEGFJQKIH operon required for the degradation of toluene, m-xylene and p-xylene. This chain is XylDLEGF operon transcriptional activator 1 (xylS1), found in Pseudomonas putida (Arthrobacter siderocapsulatus).